We begin with the raw amino-acid sequence, 212 residues long: Hevein-like preproprotein (212 aa).

Positions M1–G21 are cleaved as a signal peptide. Positions Q22–G64 constitute a Chitin-binding type-1 domain. 7 disulfide bridges follow: C24–C39, C33–C45, C38–C52, C58–C62, C100–C132, C121–C155, and C135–C191. The region spanning E72–N193 is the Barwin domain.

CB-HEL interacts strongly with a fungal fruiting body lectin.

It is found in the vacuole. Its function is as follows. Fungal growth inhibitors. Neither CB-HEL nor CD-HEL have chitinase activity, but both have antimicrobial activities. CD-HEL has RNase, but no DNase activity. The chain is Hevein-like preproprotein (HEL) from Arabidopsis thaliana (Mouse-ear cress).